A 78-amino-acid chain; its full sequence is Large ribosomal subunit protein bL28 (78 aa).

Residues 1 to 21 form a disordered region; it reads MSRVCQLSGKRANNGMAVSHS.

This sequence belongs to the bacterial ribosomal protein bL28 family.

In Synechococcus sp. (strain RCC307), this protein is Large ribosomal subunit protein bL28.